The primary structure comprises 227 residues: Cytochrome c oxidase subunit 2 (227 aa).

Residues 1–14 are Mitochondrial intermembrane-facing; the sequence is MAYPFQLGLQDASS. A helical transmembrane segment spans residues 15 to 45; the sequence is PIMEELMNFHDHTLMIVFLISSLVLYLMALM. At 46 to 59 the chain is on the mitochondrial matrix side; the sequence is LSTKLIHTSTMDAQ. Residues 60–87 traverse the membrane as a helical segment; that stretch reads EVETIWTILPAIILIMIALPSLRILYMM. Residues 88–227 lie on the Mitochondrial intermembrane side of the membrane; it reads DEINNPILTV…LFENWSMSMT (140 aa). His-161, Cys-196, Glu-198, Cys-200, His-204, and Met-207 together coordinate Cu cation. Mg(2+) is bound at residue Glu-198.

This sequence belongs to the cytochrome c oxidase subunit 2 family. Component of the cytochrome c oxidase (complex IV, CIV), a multisubunit enzyme composed of 14 subunits. The complex is composed of a catalytic core of 3 subunits MT-CO1, MT-CO2 and MT-CO3, encoded in the mitochondrial DNA, and 11 supernumerary subunits COX4I, COX5A, COX5B, COX6A, COX6B, COX6C, COX7A, COX7B, COX7C, COX8 and NDUFA4, which are encoded in the nuclear genome. The complex exists as a monomer or a dimer and forms supercomplexes (SCs) in the inner mitochondrial membrane with NADH-ubiquinone oxidoreductase (complex I, CI) and ubiquinol-cytochrome c oxidoreductase (cytochrome b-c1 complex, complex III, CIII), resulting in different assemblies (supercomplex SCI(1)III(2)IV(1) and megacomplex MCI(2)III(2)IV(2)). Found in a complex with TMEM177, COA6, COX18, COX20, SCO1 and SCO2. Interacts with TMEM177 in a COX20-dependent manner. Interacts with COX20. Interacts with COX16. Requires Cu cation as cofactor.

It localises to the mitochondrion inner membrane. It carries out the reaction 4 Fe(II)-[cytochrome c] + O2 + 8 H(+)(in) = 4 Fe(III)-[cytochrome c] + 2 H2O + 4 H(+)(out). In terms of biological role, component of the cytochrome c oxidase, the last enzyme in the mitochondrial electron transport chain which drives oxidative phosphorylation. The respiratory chain contains 3 multisubunit complexes succinate dehydrogenase (complex II, CII), ubiquinol-cytochrome c oxidoreductase (cytochrome b-c1 complex, complex III, CIII) and cytochrome c oxidase (complex IV, CIV), that cooperate to transfer electrons derived from NADH and succinate to molecular oxygen, creating an electrochemical gradient over the inner membrane that drives transmembrane transport and the ATP synthase. Cytochrome c oxidase is the component of the respiratory chain that catalyzes the reduction of oxygen to water. Electrons originating from reduced cytochrome c in the intermembrane space (IMS) are transferred via the dinuclear copper A center (CU(A)) of subunit 2 and heme A of subunit 1 to the active site in subunit 1, a binuclear center (BNC) formed by heme A3 and copper B (CU(B)). The BNC reduces molecular oxygen to 2 water molecules using 4 electrons from cytochrome c in the IMS and 4 protons from the mitochondrial matrix. This Gerbillus gerbillus (Lesser Egyptian gerbil) protein is Cytochrome c oxidase subunit 2 (MT-CO2).